Consider the following 142-residue polypeptide: Regulatory protein RecX (142 aa).

This sequence belongs to the RecX family.

It localises to the cytoplasm. In terms of biological role, modulates RecA activity. This Thermus thermophilus (strain ATCC BAA-163 / DSM 7039 / HB27) protein is Regulatory protein RecX.